A 129-amino-acid polypeptide reads, in one-letter code: NADPH-dependent 7-cyano-7-deazaguanine reductase (129 aa).

Cys-34 acts as the Thioimide intermediate in catalysis. Asp-41 functions as the Proton donor in the catalytic mechanism. Residues 56-58 (VEL) and 75-76 (HE) contribute to the substrate site.

It belongs to the GTP cyclohydrolase I family. QueF type 1 subfamily.

The protein localises to the cytoplasm. It carries out the reaction 7-aminomethyl-7-carbaguanine + 2 NADP(+) = 7-cyano-7-deazaguanine + 2 NADPH + 3 H(+). It participates in tRNA modification; tRNA-queuosine biosynthesis. Catalyzes the NADPH-dependent reduction of 7-cyano-7-deazaguanine (preQ0) to 7-aminomethyl-7-deazaguanine (preQ1). This chain is NADPH-dependent 7-cyano-7-deazaguanine reductase, found in Alkalilimnicola ehrlichii (strain ATCC BAA-1101 / DSM 17681 / MLHE-1).